Consider the following 348-residue polypeptide: Uroporphyrinogen decarboxylase (348 aa).

Substrate contacts are provided by residues 27–31 (RQAGR), Phe-46, Asp-76, Tyr-152, Ser-207, and His-320.

It belongs to the uroporphyrinogen decarboxylase family. As to quaternary structure, homodimer.

Its subcellular location is the cytoplasm. The catalysed reaction is uroporphyrinogen III + 4 H(+) = coproporphyrinogen III + 4 CO2. The protein operates within porphyrin-containing compound metabolism; protoporphyrin-IX biosynthesis; coproporphyrinogen-III from 5-aminolevulinate: step 4/4. Functionally, catalyzes the decarboxylation of four acetate groups of uroporphyrinogen-III to yield coproporphyrinogen-III. The chain is Uroporphyrinogen decarboxylase from Bacillus cytotoxicus (strain DSM 22905 / CIP 110041 / 391-98 / NVH 391-98).